The primary structure comprises 164 residues: Interleukin-10 (164 aa).

A signal peptide spans 1–18; the sequence is MPSSALLCCLIFLARVAA. Intrachain disulfides connect Cys-30-Cys-126 and Cys-80-Cys-132. Asn-134 is a glycosylation site (N-linked (GlcNAc...) asparagine).

The protein belongs to the IL-10 family. In terms of assembly, homodimer. Interacts with IL10RA and IL10RB.

Its subcellular location is the secreted. Its function is as follows. Major immune regulatory cytokine that acts on many cells of the immune system where it has profound anti-inflammatory functions, limiting excessive tissue disruption caused by inflammation. Mechanistically, IL10 binds to its heterotetrameric receptor comprising IL10RA and IL10RB leading to JAK1 and STAT2-mediated phosphorylation of STAT3. In turn, STAT3 translocates to the nucleus where it drives expression of anti-inflammatory mediators. Targets antigen-presenting cells (APCs) such as macrophages and monocytes and inhibits their release of pro-inflammatory cytokines including granulocyte-macrophage colony-stimulating factor /GM-CSF, granulocyte colony-stimulating factor/G-CSF, IL-1 alpha, IL-1 beta, IL-6, IL-8 and TNF-alpha. Also interferes with antigen presentation by reducing the expression of MHC-class II and co-stimulatory molecules, thereby inhibiting their ability to induce T cell activation. In addition, controls the inflammatory response of macrophages by reprogramming essential metabolic pathways including mTOR signaling. This chain is Interleukin-10 (IL10), found in Orcinus orca (Killer whale).